An 865-amino-acid polypeptide reads, in one-letter code: Alanine--tRNA ligase (865 aa).

Positions 556, 560, 660, and 664 each coordinate Zn(2+).

This sequence belongs to the class-II aminoacyl-tRNA synthetase family. Zn(2+) is required as a cofactor.

It localises to the cytoplasm. The catalysed reaction is tRNA(Ala) + L-alanine + ATP = L-alanyl-tRNA(Ala) + AMP + diphosphate. Functionally, catalyzes the attachment of alanine to tRNA(Ala) in a two-step reaction: alanine is first activated by ATP to form Ala-AMP and then transferred to the acceptor end of tRNA(Ala). Also edits incorrectly charged Ser-tRNA(Ala) and Gly-tRNA(Ala) via its editing domain. The chain is Alanine--tRNA ligase from Vesicomyosocius okutanii subsp. Calyptogena okutanii (strain HA).